The sequence spans 363 residues: Bonnadiene synthase (363 aa).

The Mg(2+) site is built by Asp-93, Asp-98, Asn-234, Ser-238, and Glu-242.

Belongs to the terpene synthase family. The cofactor is Mg(2+).

The enzyme catalyses (2E,6E,10E)-geranylgeranyl diphosphate = bonnadiene + diphosphate. It functions in the pathway secondary metabolite biosynthesis; terpenoid biosynthesis. In terms of biological role, diterpene synthase that catalyzes the conversion of geranylgeranyl diphosphate (GGPP) to bonnadiene. Cannot use geranyl diphosphate (GPP), farnesyl diphosphate (FPP) and geranylfarnesyl diphosphate (GFPP). This chain is Bonnadiene synthase, found in Allokutzneria albata (Kibdelosporangium albatum).